The following is a 388-amino-acid chain: Succinate--CoA ligase [ADP-forming] subunit beta (388 aa).

Residues 9-244 form the ATP-grasp domain; that stretch reads KEILRKFGVA…LDEEDPAEIE (236 aa). Residues K46, 53-55, E99, A102, and E107 each bind ATP; that span reads GRG. Residues N199 and D213 each coordinate Mg(2+). Residues N264 and 321-323 contribute to the substrate site; that span reads GIM.

The protein belongs to the succinate/malate CoA ligase beta subunit family. Heterotetramer of two alpha and two beta subunits. Requires Mg(2+) as cofactor.

It carries out the reaction succinate + ATP + CoA = succinyl-CoA + ADP + phosphate. The enzyme catalyses GTP + succinate + CoA = succinyl-CoA + GDP + phosphate. It participates in carbohydrate metabolism; tricarboxylic acid cycle; succinate from succinyl-CoA (ligase route): step 1/1. Functionally, succinyl-CoA synthetase functions in the citric acid cycle (TCA), coupling the hydrolysis of succinyl-CoA to the synthesis of either ATP or GTP and thus represents the only step of substrate-level phosphorylation in the TCA. The beta subunit provides nucleotide specificity of the enzyme and binds the substrate succinate, while the binding sites for coenzyme A and phosphate are found in the alpha subunit. In Burkholderia mallei (strain NCTC 10247), this protein is Succinate--CoA ligase [ADP-forming] subunit beta.